Consider the following 156-residue polypeptide: Probable cyclic pyranopterin monophosphate synthase (156 aa).

Substrate is bound by residues 74–76 (LCH) and 110–111 (ME). Asp125 is a catalytic residue.

The protein belongs to the MoaC family. In terms of assembly, homohexamer; trimer of dimers.

It carries out the reaction (8S)-3',8-cyclo-7,8-dihydroguanosine 5'-triphosphate = cyclic pyranopterin phosphate + diphosphate. The protein operates within cofactor biosynthesis; molybdopterin biosynthesis. Catalyzes the conversion of (8S)-3',8-cyclo-7,8-dihydroguanosine 5'-triphosphate to cyclic pyranopterin monophosphate (cPMP). The sequence is that of Probable cyclic pyranopterin monophosphate synthase from Thermococcus kodakarensis (strain ATCC BAA-918 / JCM 12380 / KOD1) (Pyrococcus kodakaraensis (strain KOD1)).